Here is a 161-residue protein sequence, read N- to C-terminus: Regulator of ribonuclease activity A (161 aa).

It belongs to the RraA family. Homotrimer. Binds to both RNA-binding sites in the C-terminal region of Rne and to RhlB.

It is found in the cytoplasm. Its function is as follows. Globally modulates RNA abundance by binding to RNase E (Rne) and regulating its endonucleolytic activity. Can modulate Rne action in a substrate-dependent manner by altering the composition of the degradosome. Modulates RNA-binding and helicase activities of the degradosome. The chain is Regulator of ribonuclease activity A from Shewanella oneidensis (strain ATCC 700550 / JCM 31522 / CIP 106686 / LMG 19005 / NCIMB 14063 / MR-1).